Reading from the N-terminus, the 367-residue chain is tRNA-specific 2-thiouridylase MnmA (367 aa).

Residues alanine 24–serine 31 and leucine 50 each bind ATP. Cysteine 115 (nucleophile) is an active-site residue. An intrachain disulfide couples cysteine 115 to cysteine 211. Glycine 139 is a binding site for ATP. The segment at lysine 161 to glutamine 163 is interaction with tRNA. Cysteine 211 serves as the catalytic Cysteine persulfide intermediate.

Belongs to the MnmA/TRMU family.

It localises to the cytoplasm. It catalyses the reaction S-sulfanyl-L-cysteinyl-[protein] + uridine(34) in tRNA + AH2 + ATP = 2-thiouridine(34) in tRNA + L-cysteinyl-[protein] + A + AMP + diphosphate + H(+). Functionally, catalyzes the 2-thiolation of uridine at the wobble position (U34) of tRNA, leading to the formation of s(2)U34. The sequence is that of tRNA-specific 2-thiouridylase MnmA from Ehrlichia canis (strain Jake).